The following is a 591-amino-acid chain: Adenine deaminase (591 aa).

It belongs to the metallo-dependent hydrolases superfamily. Adenine deaminase family. In terms of assembly, homodimer. Mn(2+) is required as a cofactor.

The catalysed reaction is adenine + H2O + H(+) = hypoxanthine + NH4(+). This chain is Adenine deaminase, found in Edwardsiella ictaluri (strain 93-146).